The primary structure comprises 197 residues: Signal peptidase complex catalytic subunit SEC11 (197 aa).

At 1 to 14 (MLSSLAPYMANPRQ) the chain is on the cytoplasmic side. A helical; Signal-anchor for type II membrane protein transmembrane segment spans residues 15 to 33 (TLTQVLNFALVLSTAFMLW). Topologically, residues 34–197 (KGLSVITNST…MGLMVVLQRE (164 aa)) are lumenal. N-linked (GlcNAc...) asparagine glycosylation occurs at Asn-41. Active-site charge relay system residues include Ser-53 and His-92. Over residues 102–115 (PGREDKKNVKKGGE) the composition is skewed to basic and acidic residues. Positions 102 to 134 (PGREDKKNVKKGGEEGEETSSTPSQKLLTKGDN) are disordered. The Charge relay system role is filled by Asp-139. The segment at 183–194 (VLLGFMGLMVVL) is C-terminal short (CTS) helix.

Belongs to the peptidase S26B family. As to quaternary structure, component of the signal peptidase complex (SPC) composed of a catalytic subunit SEC11 and three accessory subunits SPC1, SPC2 and SPC3. The complex induces a local thinning of the ER membrane which is used to measure the length of the signal peptide (SP) h-region of protein substrates. This ensures the selectivity of the complex towards h-regions shorter than 18-20 amino acids. SPC associates with the translocon complex.

It is found in the endoplasmic reticulum membrane. It carries out the reaction Cleavage of hydrophobic, N-terminal signal or leader sequences from secreted and periplasmic proteins.. Its function is as follows. Catalytic component of the signal peptidase complex (SPC) which catalyzes the cleavage of N-terminal signal sequences from nascent proteins as they are translocated into the lumen of the endoplasmic reticulum. Specifically cleaves N-terminal signal peptides that contain a hydrophobic alpha-helix (h-region) shorter than 18-20 amino acids. The protein is Signal peptidase complex catalytic subunit SEC11 (SEC11) of Paracoccidioides brasiliensis (strain Pb18).